The chain runs to 893 residues: DNA endonuclease RBBP8 (893 aa).

An essential for binding to the MRN complex and for RPA focus formation on DNA damage region spans residues 22 to 45 (ELWTKLKEYHDKEVQGLQVKVTKL). Positions 35–84 (VQGLQVKVTKLKKERILDAQRLEEFFTKNQQLRDQQKVLQETIKILEDRL) form a coiled coil. Positions 45–160 (LKKERILDAQ…AELACEENII (116 aa)) are required for interaction with LMO4, probably by stabilizing the interaction through RPPB8 dimerization. Residues K62 and K115 each participate in a glycyl lysine isopeptide (Lys-Gly) (interchain with G-Cter in SUMO2) cross-link. Residues 117 to 138 (ITELMNEKNTLQEENKKLSEQL) are a coiled coil. A Glycyl lysine isopeptide (Lys-Gly) (interchain with G-Cter in SUMO2) cross-link involves residue K193. 2 positions are modified to phosphoserine: S233 and S276. A compositionally biased stretch (basic and acidic residues) spans 296–307 (MESARSKEDSLR). Residues 296–324 (MESARSKEDSLRFSDSASKTPPQEFTTRA) form a disordered region. A compositionally biased stretch (polar residues) spans 308-324 (FSDSASKTPPQEFTTRA). A Phosphothreonine modification is found at T315. Phosphoserine occurs at positions 325, 326, and 348. Residues K359 and K377 each participate in a glycyl lysine isopeptide (Lys-Gly) (interchain with G-Cter in SUMO2) cross-link. Position 378 is a phosphoserine (S378). Glycyl lysine isopeptide (Lys-Gly) (interchain with G-Cter in SUMO2) cross-links involve residues K394, K403, K409, and K437. The PXDLS motif motif lies at 489–493 (PLDLS). Positions 508-556 (NETSKNKLKQATIYEALKPIPKGSSSGRKALSGDCMPAKDSWETYCLQP) are damage-recruitment motif. A Glycyl lysine isopeptide (Lys-Gly) (interchain with G-Cter in SUMO2); alternate cross-link involves residue K525. Residues K529, K570, and K576 each participate in a glycyl lysine isopeptide (Lys-Gly) (interchain with G-Cter in SUMO2) cross-link. Residue K602 forms a Glycyl lysine isopeptide (Lys-Gly) (interchain with G-Cter in SUMO2); alternate linkage. Glycyl lysine isopeptide (Lys-Gly) (interchain with G-Cter in SUMO2) cross-links involve residues K611, K636, and K638. Residues 639–683 (ALPSNQDTSFENIQWSVDPGADLSQYKMDVTVIDTKDSSHSRLGG) form a required for interaction with LMO4, probably by making physical contact with LMO4 region. S662 carries the post-translational modification Phosphoserine; by ATM. K674 is covalently cross-linked (Glycyl lysine isopeptide (Lys-Gly) (interchain with G-Cter in SUMO2)). S677 is modified (phosphoserine). A Glycyl lysine isopeptide (Lys-Gly) (interchain with G-Cter in SUMO2) cross-link involves residue K716. Phosphoserine is present on S720. S742 is modified (phosphoserine; by ATM). K778 participates in a covalent cross-link: Glycyl lysine isopeptide (Lys-Gly) (interchain with G-Cter in SUMO2). The KLHL15-binding signature appears at 836 to 838 (FRY). Phosphothreonine occurs at positions 843 and 855. K865 participates in a covalent cross-link: Glycyl lysine isopeptide (Lys-Gly) (interchain with G-Cter in SUMO2). Positions 869–893 (DLSPRPKRRQPYNAVFSPKGKEQRT) are disordered.

This sequence belongs to the COM1/SAE2/CtIP family. In terms of assembly, homotetramer; formed by antiparallel association of helical extensions protruding from the N-termini of two parallel coiled-coil dimers. Forms a dumbbell-shaped particle in which polar globular domains are held about 30 nm apart by a central rod. Homotetramerization is required for DNA-end resection and repair. Interacts (via the PXDLS motif) with CTBP1; the interaction is disrupted via binding of the adenovirus E1A to CTBP1. Component of the BRCA1-RBBP8 complex. Interacts (the Ser-326 phosphorylated form) with BRCA1 (via the C-terminal BRCT domains): the interaction occurs in the G2 phase, ubiquitinates RBBP8 and involves RBBP8 in BRCA1-dependent G2/M checkpoint control on DNA damage. Interacts with RB1. Interacts with the MRN complex. Interacts directly with MRE11; the interaction is required for efficient homologous recombination (HR) and regulation of the MRN complex. Interacts (when phosphorylated by CDK1) with NBN; promoting association with the MRN complex. Interacts with LMO4 (via the LIM zinc-binding 1 domain). Interacts with SIAH1. Interacts with RNF138. Interacts with EXD2. Interacts with CUL3 and KLHL15; this interaction leads to RBBP8 proteasomal degradation. Directly interacts with PIN1; this interaction depends upon RBBP8 phosphorylation, predominantly at Thr-315. Interacts with FZR1; this interaction leads to APC/C-mediated RBBP8 proteasomal degradation. Interacts with AUNIP; leading to recruit RBBP8 to sites of DNA damage. Interacts with SAMHD1. Interacts with HDGFL2. In terms of processing, hyperphosphorylation upon ionizing radiation results in dissociation from BRCA1. Phosphorylation at Thr-843 by CDK1 is essential for the recruitment to DNA and the DNA repair function. Phosphorylation at Thr-843 and Thr-855 promote interaction with NBN and recruitment to double-strand breaks (DSBs). Phosphorylated on Ser-326 as cells enter G2 phase. Phosphorylated at Ser-326 as cells enter G2 phase. This phosphorylation is required for binding BRCA1 and for the G2/M DNA damage transition checkpoint control. Phosphorylation at Thr-315 is required for PIN1-binding, while phosphorylation at Ser-276 serves as a PIN1 isomerization site. Phosphorylation at Thr-315 is cell-cycle dependent. It steadily increases during S phase, peaks at late S/G2 phase, and drops at G1. Phosphorylation is not required for tetramerization. Binds to DNA more strongly when dephosphorylated. Post-translationally, ubiquitinated. Ubiquitination at multiple sites by BRCA1 (via its N-terminal RING domain) does not lead to its proteasomal degradation but instead the ubiquitinated RBBP8 binds to chromatin following DNA damage and may play a role in G2/M checkpoint control. Ubiquitinated by RNF138 at its N-terminus. Ubiquitinated through 'Lys-48' by the E3 CUL3-KLHL15 complex; this modification leads to proteasomal degradation. Ubiquitinated by the E3 FZR1/APC/C complex; this modification leads to proteasomal degradation.

The protein localises to the nucleus. Its subcellular location is the chromosome. In terms of biological role, endonuclease that cooperates with the MRE11-RAD50-NBN (MRN) complex in DNA-end resection, the first step of double-strand break (DSB) repair through the homologous recombination (HR) pathway. HR is restricted to S and G2 phases of the cell cycle and preferentially repairs DSBs resulting from replication fork collapse. Key determinant of DSB repair pathway choice, as it commits cells to HR by preventing classical non-homologous end-joining (NHEJ). Specifically promotes the endonuclease activity of the MRN complex to clear DNA ends containing protein adducts: recruited to DSBs by NBN following phosphorylation by CDK1, and promotes the endonuclease activity of MRE11 to clear protein-DNA adducts and generate clean double-strand break ends. Functions downstream of the MRN complex and ATM, promotes ATR activation and its recruitment to DSBs in the S/G2 phase facilitating the generation of ssDNA. Component of the BRCA1-RBBP8 complex that regulates CHEK1 activation and controls cell cycle G2/M checkpoints on DNA damage. During immunoglobulin heavy chain class-switch recombination, promotes microhomology-mediated alternative end joining (A-NHEJ) and plays an essential role in chromosomal translocations. Binds preferentially to DNA Y-junctions and to DNA substrates with blocked ends and promotes intermolecular DNA bridging. This Mus musculus (Mouse) protein is DNA endonuclease RBBP8 (Rbbp8).